Consider the following 109-residue polypeptide: MTLKLIWDKFYVSIIFVLTCIVLGIILMCTVVGGGSDYSEVNVNEGDSLWALADQYAGKSDMAKADFVSWVEKENNLSDGHVEAGDSVVIPVHKTKLLKSDSTIQLANQ.

Residues 39–90 enclose the LysM domain; that stretch reads SEVNVNEGDSLWALADQYAGKSDMAKADFVSWVEKENNLSDGHVEAGDSVVI.

It belongs to the YneA family.

Its subcellular location is the cytoplasm. Functionally, inhibits cell division during the SOS response. Affects a later stage of the cell division protein assembly, after the assembly of the Z ring, by probably suppressing recruitment of FtsL and/or DivIC to the division machinery. This is Cell division suppressor protein YneA from Listeria monocytogenes serovar 1/2a (strain ATCC BAA-679 / EGD-e).